Consider the following 588-residue polypeptide: Methylcrotonoyl-CoA carboxylase beta chain, mitochondrial (588 aa).

One can recognise a CoA carboxyltransferase N-terminal domain in the interval 72-329 (MNSTLKQLKE…KKQPSPVITE (258 aa)). Residues 72–570 (MNSTLKQLKE…RKVIALSLSA (499 aa)) form a carboxyltransferase region. The CoA carboxyltransferase C-terminal domain occupies 329 to 570 (ETEEPLYPTS…RKVIALSLSA (242 aa)). The acyl-CoA binding stretch occupies residues 366–395 (RFDEFKELYGTTLICGFARVHGMPVGIIAN).

Belongs to the AccD/PCCB family. Probably a dodecamer composed of six biotin-containing alpha subunits and six beta subunits.

Its subcellular location is the mitochondrion matrix. It catalyses the reaction 3-methylbut-2-enoyl-CoA + hydrogencarbonate + ATP = 3-methyl-(2E)-glutaconyl-CoA + ADP + phosphate + H(+). It participates in amino-acid degradation; L-leucine degradation; (S)-3-hydroxy-3-methylglutaryl-CoA from 3-isovaleryl-CoA: step 2/3. Functionally, carboxyltransferase subunit of the 3-methylcrotonyl-CoA carboxylase, an enzyme that catalyzes the conversion of 3-methylcrotonyl-CoA to 3-methylglutaconyl-CoA, a critical step for leucine and isovaleric acid catabolism. This Dictyostelium discoideum (Social amoeba) protein is Methylcrotonoyl-CoA carboxylase beta chain, mitochondrial (mccb).